Reading from the N-terminus, the 465-residue chain is Dihydrolipoyl dehydrogenase (465 aa).

Residues 34–42 (EKREAGGTC), Lys-51, and Gly-114 contribute to the FAD site. A disulfide bridge links Cys-42 with Cys-47. Residues 180-184 (GGGVI), Glu-203, Val-237, and 264-267 (SIGR) each bind NAD(+). FAD contacts are provided by Asp-307 and Ala-315. His-439 (proton acceptor) is an active-site residue.

Belongs to the class-I pyridine nucleotide-disulfide oxidoreductase family. FAD serves as cofactor.

The protein resides in the cytoplasm. The enzyme catalyses N(6)-[(R)-dihydrolipoyl]-L-lysyl-[protein] + NAD(+) = N(6)-[(R)-lipoyl]-L-lysyl-[protein] + NADH + H(+). Its function is as follows. The branched-chain alpha-keto dehydrogenase complex catalyzes the overall conversion of alpha-keto acids to acyl-CoA and CO(2). It contains multiple copies of 3 enzymatic components: branched-chain alpha-keto acid decarboxylase (E1), lipoamide acyltransferase (E2) and lipoamide dehydrogenase (E3). This is Dihydrolipoyl dehydrogenase (lpdA) from Chlamydia trachomatis serovar D (strain ATCC VR-885 / DSM 19411 / UW-3/Cx).